We begin with the raw amino-acid sequence, 1810 residues long: Trinucleotide repeat-containing gene 6B protein (1810 aa).

Positions 1–22 (MQTNEGEVEEESSSQVEQEDFV) are enriched in acidic residues. 4 disordered regions span residues 1–221 (MQTN…PNPI), 235–1080 (EEWP…KKQM), 1141–1196 (MRKD…SSPG), and 1293–1329 (ALQQ…NMVP). Residues 33 to 75 (GEESKQEKEQEREEQLMEDKKRKKEDKKKKEATQKVTEQKTKV) adopt a coiled-coil conformation. Basic and acidic residues-rich tracts occupy residues 34 to 52 (EESK…MEDK) and 60 to 77 (KKKE…KVPE). Residues 37 to 1028 (KQEKEQEREE…AMKPNSKSMQ (992 aa)) form an interaction with argonaute proteins region. Residues 88–106 (AASPIGSSPSPPVNGGNNA) are compositionally biased toward low complexity. Over residues 123 to 139 (MPREVPPRFRCQQDHKV) the composition is skewed to basic and acidic residues. Low complexity predominate over residues 165–174 (APGANPNNNA). Over residues 180–190 (LLQSESGTAPE) the composition is skewed to polar residues. Composition is skewed to low complexity over residues 207-220 (GPGA…SPNP) and 248-260 (SSEN…SASN). Composition is skewed to polar residues over residues 261–290 (PGSE…SGNE) and 306–327 (QPPN…TSGQ). 3 stretches are compositionally biased toward low complexity: residues 335–346 (GFSNFNPNSNPS), 363–380 (ETES…GQAS), and 416–425 (NSLNLSSPNP). Residues 438–451 (GNTSRSTDAPSQST) show a composition bias toward polar residues. Over residues 475–486 (SGQSNSGNNGNN) the composition is skewed to low complexity. 4 stretches are compositionally biased toward polar residues: residues 504–528 (GSKS…PQDN), 564–575 (GPNQPNSSTGAW), 611–623 (TGSN…SDSH), and 655–667 (LSNT…QIKQ). Over residues 675-688 (EVPRPEGKSDKGTE) the composition is skewed to basic and acidic residues. 2 stretches are compositionally biased toward polar residues: residues 774–783 (QPNQGWTSGK) and 793–804 (VKNNNWESSANK). Positions 809 to 824 (WGEGGQNEIGTWGNGG) are enriched in gly residues. Over residues 846-857 (TGRQPNSWNKQH) the composition is skewed to polar residues. The residue at position 913 (S913) is a Phosphoserine. Polar residues-rich tracts occupy residues 934–950 (NSYN…NSQG), 964–975 (TGKSASVWSKST), 1004–1027 (ASTT…SKSM), 1057–1072 (TAGS…SASW), and 1175–1195 (GNST…SSSP). The segment at 1191–1700 (LSSSPGLRAQ…LAEFATEDEV (510 aa)) is silencing domain; interaction with CNOT1 and PAN3. The span at 1295 to 1307 (QQQQQQQQQQQRQ) shows a compositional bias: low complexity. S1409 carries the phosphoserine modification. A Phosphothreonine modification is found at T1426. A Phosphoserine modification is found at S1438. Position 1441 is a phosphothreonine (T1441). The interval 1449-1467 (SNASWPPEFQPGVPWKGIQ) is PABPC1-interacting motif-2 (PAM2). The tract at residues 1568 to 1619 (SSRNTTPLTRPPPGLTNPKPASPWSSTAPRSVRGWGTQDSRIASASTWSDGG) is disordered. Residues 1604-1617 (TQDSRIASASTWSD) show a composition bias toward polar residues. In terms of domain architecture, RRM spans 1625–1697 (YWLVLHNLTP…TTILAEFATE (73 aa)). Disordered stretches follow at residues 1706 to 1740 (QAQP…GPAL) and 1786 to 1810 (EDPH…SDSI). Positions 1722–1733 (GWQSLETSQNQA) are enriched in polar residues. Low complexity predominate over residues 1792 to 1801 (GSPAPLLPGD). 2 positions are modified to phosphoserine: S1793 and S1809.

It belongs to the GW182 family. In terms of assembly, interacts with AGO1, AGO2, AGO3 and AGO4. Interacts with CNOT1; the interaction mediates the association with the CCR4-NOT complex. Interacts with PAN3; the interaction mediates the association with the PAN complex. Interacts with MOV10; the interaction is direct and RNA-dependent.

It localises to the cytoplasm. The protein localises to the P-body. Plays a role in RNA-mediated gene silencing by both micro-RNAs (miRNAs) and short interfering RNAs (siRNAs). Required for miRNA-dependent translational repression and siRNA-dependent endonucleolytic cleavage of complementary mRNAs by argonaute family proteins. As scaffolding protein associates with argonaute proteins bound to partially complementary mRNAs and simultaneously can recruit CCR4-NOT and PAN deadenylase complexes. This chain is Trinucleotide repeat-containing gene 6B protein (Tnrc6b), found in Mus musculus (Mouse).